Here is a 225-residue protein sequence, read N- to C-terminus: Ribosome maturation factor RimP (225 aa).

Belongs to the RimP family.

It localises to the cytoplasm. Functionally, required for maturation of 30S ribosomal subunits. The chain is Ribosome maturation factor RimP from Rhodospirillum rubrum (strain ATCC 11170 / ATH 1.1.1 / DSM 467 / LMG 4362 / NCIMB 8255 / S1).